Here is a 335-residue protein sequence, read N- to C-terminus: uncharacterized protein (335 aa).

Residues Gly-201–Thr-236 are disordered. The span at Arg-210 to Asn-235 shows a compositional bias: basic and acidic residues.

Dispensable for normal development and fertility. This is an uncharacterized protein from Homo sapiens (Human).